The chain runs to 531 residues: Cytochrome c oxidase subunit 1 (531 aa).

A helical transmembrane segment spans residues 18–38; sequence ILYLIYGMVSAMVATGMSVII. 2 residues coordinate Ca(2+): Glu-41 and Gly-46. The next 6 membrane-spanning stretches (helical) occupy residues 59–79, 103–123, 149–169, 185–205, 237–257, and 269–289; these read VLVT…ILIG, ISFW…LIET, AIFA…NFIV, PLFV…LPVL, LFYF…FGII, and IFGQ…GFLV. Residue His-64 coordinates Fe(II)-heme a. A Cu cation-binding site is contributed by His-243. The 1'-histidyl-3'-tyrosine (His-Tyr) cross-link spans 243 to 247; that stretch reads HPEVY. Tyr-247 lines the O2 pocket. Cu cation contacts are provided by His-292 and His-293. 2 helical membrane-spanning segments follow: residues 312–332 and 340–360; these read MVIA…LYGG and MLFA…GVML. Residues His-370 and Asp-371 each coordinate Mg(2+). His-378 contacts heme a3. His-380 contacts Fe(II)-heme a. Helical transmembrane passes span 385–405 and 414–434; these read MGAL…MFGL and VHYW…HFLG. Residue Pro-443 participates in Ca(2+) binding. The helical transmembrane segment at 458 to 478 threads the bilayer; it reads WGSIMSVISVLIGLYSVLVQL.

It belongs to the heme-copper respiratory oxidase family. Component of the cytochrome c oxidase (complex IV, CIV), a multisubunit enzyme composed of a catalytic core of 3 subunits and several supernumerary subunits. The complex exists as a monomer or a dimer and forms supercomplexes (SCs) in the inner mitochondrial membrane with ubiquinol-cytochrome c oxidoreductase (cytochrome b-c1 complex, complex III, CIII). Requires heme as cofactor. Cu cation is required as a cofactor.

It is found in the mitochondrion inner membrane. It catalyses the reaction 4 Fe(II)-[cytochrome c] + O2 + 8 H(+)(in) = 4 Fe(III)-[cytochrome c] + 2 H2O + 4 H(+)(out). It functions in the pathway energy metabolism; oxidative phosphorylation. In terms of biological role, component of the cytochrome c oxidase, the last enzyme in the mitochondrial electron transport chain which drives oxidative phosphorylation. The respiratory chain contains 3 multisubunit complexes succinate dehydrogenase (complex II, CII), ubiquinol-cytochrome c oxidoreductase (cytochrome b-c1 complex, complex III, CIII) and cytochrome c oxidase (complex IV, CIV), that cooperate to transfer electrons derived from NADH and succinate to molecular oxygen, creating an electrochemical gradient over the inner membrane that drives transmembrane transport and the ATP synthase. Cytochrome c oxidase is the component of the respiratory chain that catalyzes the reduction of oxygen to water. Electrons originating from reduced cytochrome c in the intermembrane space (IMS) are transferred via the dinuclear copper A center (CU(A)) of subunit 2 and heme A of subunit 1 to the active site in subunit 1, a binuclear center (BNC) formed by heme A3 and copper B (CU(B)). The BNC reduces molecular oxygen to 2 water molecules using 4 electrons from cytochrome c in the IMS and 4 protons from the mitochondrial matrix. The sequence is that of Cytochrome c oxidase subunit 1 (COX1) from Candida albicans (strain SC5314 / ATCC MYA-2876) (Yeast).